A 543-amino-acid chain; its full sequence is Chaperonin GroEL (543 aa).

ATP-binding positions include 30-33 (TLGP), Lys-51, 87-91 (DGTTT), Gly-415, 479-481 (NAA), and Asp-495.

It belongs to the chaperonin (HSP60) family. Forms a cylinder of 14 subunits composed of two heptameric rings stacked back-to-back. Interacts with the co-chaperonin GroES.

It is found in the cytoplasm. The catalysed reaction is ATP + H2O + a folded polypeptide = ADP + phosphate + an unfolded polypeptide.. Its function is as follows. Together with its co-chaperonin GroES, plays an essential role in assisting protein folding. The GroEL-GroES system forms a nano-cage that allows encapsulation of the non-native substrate proteins and provides a physical environment optimized to promote and accelerate protein folding. This Francisella philomiragia subsp. philomiragia (strain ATCC 25017 / CCUG 19701 / FSC 153 / O#319-036) protein is Chaperonin GroEL.